The chain runs to 538 residues: Chaperonin GroEL (538 aa).

ATP-binding positions include 29–32 (TLGP), 86–90 (DGTTT), Gly-413, 477–479 (NAA), and Asp-493.

This sequence belongs to the chaperonin (HSP60) family. In terms of assembly, forms a cylinder of 14 subunits composed of two heptameric rings stacked back-to-back. Interacts with the co-chaperonin GroES.

Its subcellular location is the cytoplasm. The catalysed reaction is ATP + H2O + a folded polypeptide = ADP + phosphate + an unfolded polypeptide.. Together with its co-chaperonin GroES, plays an essential role in assisting protein folding. The GroEL-GroES system forms a nano-cage that allows encapsulation of the non-native substrate proteins and provides a physical environment optimized to promote and accelerate protein folding. In Bifidobacterium adolescentis (strain ATCC 15703 / DSM 20083 / NCTC 11814 / E194a), this protein is Chaperonin GroEL.